A 795-amino-acid polypeptide reads, in one-letter code: MKSAWALALACTLLLAASVTAEEVDVDATVEEDLGKSREGSRTDDEVVQREEEAIQLDGLNASQIKEIREKSEKFAFQAEVNRMMKLIINSLYKNKEIFLRELISNASDALDKIRLISLTDENALAGNEELTVKIKCDKEKNMLHVTDTGIGMTKEELIKNLGTIAKSGTSEFLNKMTEMQDDSQSTSELIGQFGVGFYSAFLVADRVIVTSKHNNDTQHIWESDSNEFSVIDDPRGNTLGRGTTITLVLKEEASDYLELDTVKNLVKKYSQFINFPIYVWSSKTETVEEPVEEEEAKEEKEETDDNEAAVEEEEEEKKPKTKKVEKTVWDWELMNDIKPIWQRPSKEVEEDEYKAFYKTFSKEHDDPMAYIHFTAEGEVTFKSILFVPNSAPRGLFDEYGSKKSDFIKLYVRRVFITDDFHDMMPKYLNFVKGVVDSDDLPLNVSRETLQQHKLLKVIRKKLVRKTLDMIKKIAEEKYNDTFWKEFGTNVKLGVIEDHSNRTRLAKLLRFQSSHHESNLTSLDQYVERMKEKQDKIYFMAGASRKEAESSPFVERLLKKGYEVIYLTEPVDEYCIQALPEFDGKRFQNVAKEGVKFEESEKSKESREALEKEFEPLLNWMKDKALKDKIEKAVLSQRLTQSPCALVASQYGWSGNMERIMKAQAYQTGKDISTNYYASQKKTFEINPRHPLIKDMLRRVKENEDDKTVSDLAVVLFETATLRSGYMLPDTKEYGDRIERMLRLSLNIDLDAKVEEEPEEPEDAAEEAEQDEEEVDADAEDSETQKESTDVKDEL.

Residues 1 to 21 (MKSAWALALACTLLLAASVTA) form the signal peptide. The SRT pseudosubstrate motif motif lies at 41 to 43 (SRT). Residues Asn61 and Asn106 are each glycosylated (N-linked (GlcNAc...) asparagine). 4 residues coordinate ATP: Asn106, Asp148, Asn161, and Phe198. A glycan (N-linked (GlcNAc...) asparagine) is linked at Asn216. The segment covering 289–316 (EEPVEEEEAKEEKEETDDNEAAVEEEEE) has biased composition (acidic residues). The segment at 289 to 322 (EEPVEEEEAKEEKEETDDNEAAVEEEEEEKKPKT) is disordered. Asn444, Asn480, and Asn501 each carry an N-linked (GlcNAc...) asparagine glycan. Positions 751-795 (DAKVEEEPEEPEDAAEEAEQDEEEVDADAEDSETQKESTDVKDEL) are disordered. The span at 756-782 (EEPEEPEDAAEEAEQDEEEVDADAEDS) shows a compositional bias: acidic residues. Basic and acidic residues predominate over residues 783–795 (ETQKESTDVKDEL). A Prevents secretion from ER motif is present at residues 792–795 (KDEL).

Belongs to the heat shock protein 90 family. Homodimer; disulfide-linked.

Its subcellular location is the endoplasmic reticulum lumen. The protein localises to the sarcoplasmic reticulum lumen. It carries out the reaction ATP + H2O = ADP + phosphate + H(+). ATP-dependent chaperone involved in the processing of proteins in the endoplasmic reticulum, regulating their transport. This Gallus gallus (Chicken) protein is Endoplasmin (HSP90B1).